Reading from the N-terminus, the 90-residue chain is Large ribosomal subunit protein uL23c (90 aa).

It belongs to the universal ribosomal protein uL23 family. In terms of assembly, part of the 50S ribosomal subunit.

The protein localises to the plastid. The protein resides in the chloroplast. In terms of biological role, binds to 23S rRNA. This is Large ribosomal subunit protein uL23c (rpl23) from Oltmannsiellopsis viridis (Marine flagellate).